Consider the following 280-residue polypeptide: Putative pyruvate, phosphate dikinase regulatory protein (280 aa).

147–154 serves as a coordination point for ADP; sequence GASRSSKT.

It belongs to the pyruvate, phosphate/water dikinase regulatory protein family. PDRP subfamily.

The enzyme catalyses N(tele)-phospho-L-histidyl/L-threonyl-[pyruvate, phosphate dikinase] + ADP = N(tele)-phospho-L-histidyl/O-phospho-L-threonyl-[pyruvate, phosphate dikinase] + AMP + H(+). It catalyses the reaction N(tele)-phospho-L-histidyl/O-phospho-L-threonyl-[pyruvate, phosphate dikinase] + phosphate + H(+) = N(tele)-phospho-L-histidyl/L-threonyl-[pyruvate, phosphate dikinase] + diphosphate. Functionally, bifunctional serine/threonine kinase and phosphorylase involved in the regulation of the pyruvate, phosphate dikinase (PPDK) by catalyzing its phosphorylation/dephosphorylation. This Pelobacter propionicus (strain DSM 2379 / NBRC 103807 / OttBd1) protein is Putative pyruvate, phosphate dikinase regulatory protein.